We begin with the raw amino-acid sequence, 452 residues long: Pup--protein ligase (452 aa).

Glu9 contributes to the Mg(2+) binding site. Arg53 contributes to the ATP binding site. A Mg(2+)-binding site is contributed by Tyr55. Catalysis depends on Asp57, which acts as the Proton acceptor. Glu63 serves as a coordination point for Mg(2+). Thr66 and Trp419 together coordinate ATP.

This sequence belongs to the Pup ligase/Pup deamidase family. Pup-conjugating enzyme subfamily.

It carries out the reaction ATP + [prokaryotic ubiquitin-like protein]-L-glutamate + [protein]-L-lysine = ADP + phosphate + N(6)-([prokaryotic ubiquitin-like protein]-gamma-L-glutamyl)-[protein]-L-lysine.. It participates in protein degradation; proteasomal Pup-dependent pathway. The protein operates within protein modification; protein pupylation. Functionally, catalyzes the covalent attachment of the prokaryotic ubiquitin-like protein modifier Pup to the proteasomal substrate proteins, thereby targeting them for proteasomal degradation. This tagging system is termed pupylation. The ligation reaction involves the side-chain carboxylate of the C-terminal glutamate of Pup and the side-chain amino group of a substrate lysine. In Parafrankia sp. (strain EAN1pec), this protein is Pup--protein ligase.